The primary structure comprises 272 residues: 4-hydroxy-tetrahydrodipicolinate reductase (272 aa).

NAD(+)-binding positions include 10–15, Glu-36, 100–102, and 124–127; these read GAGGRM, GTT, and SGNM. His-157 functions as the Proton donor/acceptor in the catalytic mechanism. His-158 contacts (S)-2,3,4,5-tetrahydrodipicolinate. The active-site Proton donor is the Lys-161. (S)-2,3,4,5-tetrahydrodipicolinate is bound at residue 167–168; that stretch reads GT.

It belongs to the DapB family.

The protein localises to the cytoplasm. It catalyses the reaction (S)-2,3,4,5-tetrahydrodipicolinate + NAD(+) + H2O = (2S,4S)-4-hydroxy-2,3,4,5-tetrahydrodipicolinate + NADH + H(+). The catalysed reaction is (S)-2,3,4,5-tetrahydrodipicolinate + NADP(+) + H2O = (2S,4S)-4-hydroxy-2,3,4,5-tetrahydrodipicolinate + NADPH + H(+). Its pathway is amino-acid biosynthesis; L-lysine biosynthesis via DAP pathway; (S)-tetrahydrodipicolinate from L-aspartate: step 4/4. In terms of biological role, catalyzes the conversion of 4-hydroxy-tetrahydrodipicolinate (HTPA) to tetrahydrodipicolinate. The sequence is that of 4-hydroxy-tetrahydrodipicolinate reductase from Afipia carboxidovorans (strain ATCC 49405 / DSM 1227 / KCTC 32145 / OM5) (Oligotropha carboxidovorans).